The following is a 300-amino-acid chain: MAFQECVIEVAQDQAEAWSDALFDLGALSVSVEDADADTPDEQPLFGEPGLEPKQLAWNRSRVVALFGDDADPAVVVAAAANQLGIDPVPAYQLRAVEDQDWVRLTQSQFEPIRIGERIWVVPSWHDAPEPDAVVLELDPGLAFGTGSHPTTRLCMQWLEQNLKPGETVLDYGCGSGILAIVARKLGAGDTVGIDIDPNAVEASRYNAERNRVEASFALPESVSEASYDLVVANILSNPLKLMAAMLSARVRAGGRLVLSGVLERQADEVAAAYAPWLPLTVWRSEEGWVCLHGTRGAQP.

Positions 152, 173, 195, and 234 each coordinate S-adenosyl-L-methionine.

It belongs to the methyltransferase superfamily. PrmA family.

The protein localises to the cytoplasm. The catalysed reaction is L-lysyl-[protein] + 3 S-adenosyl-L-methionine = N(6),N(6),N(6)-trimethyl-L-lysyl-[protein] + 3 S-adenosyl-L-homocysteine + 3 H(+). Functionally, methylates ribosomal protein L11. This Cupriavidus necator (strain ATCC 17699 / DSM 428 / KCTC 22496 / NCIMB 10442 / H16 / Stanier 337) (Ralstonia eutropha) protein is Ribosomal protein L11 methyltransferase.